The sequence spans 65 residues: MAKVSSAYLKFALVMILLLSVISAVMSAGCIKNGGRCNASAGPPYCCSSYCFQIAGQSYGVCKNR.

The signal sequence occupies residues 1-27; sequence MAKVSSAYLKFALVMILLLSVISAVMS. 3 disulfides stabilise this stretch: Cys30/Cys47, Cys37/Cys51, and Cys46/Cys62.

Belongs to the AMP family. As to expression, seed specific.

Its subcellular location is the secreted. Possesses antifungal activity. The polypeptide is Antimicrobial peptide 1 (Phytolacca americana (American pokeweed)).